A 564-amino-acid chain; its full sequence is Acetylcholine receptor subunit alpha-type deg-3 (564 aa).

The signal sequence occupies residues 1 to 20 (MTLKIRTIIILFCVISVTTT). The Extracellular portion of the chain corresponds to 21-268 (SQSLNATLKT…SLVIQRKPLY (248 aa)). N-linked (GlcNAc...) asparagine glycans are attached at residues Asn-25, Asn-37, Asn-125, and Asn-198. 2 disulfide bridges follow: Cys-185–Cys-199 and Cys-248–Cys-249. 3 consecutive transmembrane segments (helical) span residues 269–289 (YLVNLIIPTSIITLVAITGFF), 302–319 (INLGITTLLAMSILMLMV), and 329–353 (FVPLIAWFYLSIIIIISIGTFLTSV). Residues 354–526 (VLSVQGRRQY…WEFLATVLDR (173 aa)) lie on the Cytoplasmic side of the membrane. Residues 527–547 (FLLIVFVGAVVIVTAGLILVG) form a helical membrane-spanning segment.

This sequence belongs to the ligand-gated ion channel (TC 1.A.9) family. Acetylcholine receptor (TC 1.A.9.1) subfamily. As to quaternary structure, the functional receptor is a heteromer of deg-3 and des-2. Interacts with ric-3; which is required for proper receptor folding.

The protein resides in the postsynaptic cell membrane. It is found in the cell membrane. Its function is as follows. Subunit of the non-synaptic neuronal acetylcholine receptor, which may play a role in chemotaxis towards choline. After binding choline or acetylcholine, the AChR responds by an extensive change in conformation that affects all subunits and leads to opening of an ion-conducting channel across the plasma membrane. In Caenorhabditis elegans, this protein is Acetylcholine receptor subunit alpha-type deg-3 (deg-3).